The chain runs to 179 residues: Small heat shock protein hspK (179 aa).

In terms of domain architecture, sHSP spans His-32–Lys-178. The disordered stretch occupies residues Lys-80 to Ala-122. The segment covering Asn-87 to Thr-114 has biased composition (low complexity).

The protein belongs to the small heat shock protein (HSP20) family.

This Dictyostelium discoideum (Social amoeba) protein is Small heat shock protein hspK (hspK).